The chain runs to 345 residues: Uroporphyrinogen decarboxylase (345 aa).

Substrate is bound by residues 27–31 (RQAGR), Phe-46, Asp-76, Tyr-152, Ser-207, and His-321.

The protein belongs to the uroporphyrinogen decarboxylase family. As to quaternary structure, homodimer.

It is found in the cytoplasm. It catalyses the reaction uroporphyrinogen III + 4 H(+) = coproporphyrinogen III + 4 CO2. The protein operates within porphyrin-containing compound metabolism; protoporphyrin-IX biosynthesis; coproporphyrinogen-III from 5-aminolevulinate: step 4/4. Functionally, catalyzes the decarboxylation of four acetate groups of uroporphyrinogen-III to yield coproporphyrinogen-III. The chain is Uroporphyrinogen decarboxylase from Staphylococcus aureus (strain Mu3 / ATCC 700698).